The following is a 299-amino-acid chain: Glycine--tRNA ligase alpha subunit (299 aa).

It belongs to the class-II aminoacyl-tRNA synthetase family. As to quaternary structure, tetramer of two alpha and two beta subunits.

The protein localises to the cytoplasm. It catalyses the reaction tRNA(Gly) + glycine + ATP = glycyl-tRNA(Gly) + AMP + diphosphate. This is Glycine--tRNA ligase alpha subunit from Laribacter hongkongensis (strain HLHK9).